Consider the following 104-residue polypeptide: Large ribosomal subunit protein uL24 (104 aa).

The tract at residues 82–104 (RVGYRFDENGKKVRVSRRNGKDI) is disordered. Over residues 93 to 104 (KVRVSRRNGKDI) the composition is skewed to basic residues.

Belongs to the universal ribosomal protein uL24 family. Part of the 50S ribosomal subunit.

Functionally, one of two assembly initiator proteins, it binds directly to the 5'-end of the 23S rRNA, where it nucleates assembly of the 50S subunit. One of the proteins that surrounds the polypeptide exit tunnel on the outside of the subunit. The sequence is that of Large ribosomal subunit protein uL24 from Corynebacterium glutamicum (strain R).